The primary structure comprises 436 residues: Methylenetetrahydrofolate--tRNA-(uracil-5-)-methyltransferase TrmFO (436 aa).

7–12 (GAGLAG) serves as a coordination point for FAD.

Belongs to the MnmG family. TrmFO subfamily. It depends on FAD as a cofactor.

The protein resides in the cytoplasm. It carries out the reaction uridine(54) in tRNA + (6R)-5,10-methylene-5,6,7,8-tetrahydrofolate + NADH + H(+) = 5-methyluridine(54) in tRNA + (6S)-5,6,7,8-tetrahydrofolate + NAD(+). The enzyme catalyses uridine(54) in tRNA + (6R)-5,10-methylene-5,6,7,8-tetrahydrofolate + NADPH + H(+) = 5-methyluridine(54) in tRNA + (6S)-5,6,7,8-tetrahydrofolate + NADP(+). Its function is as follows. Catalyzes the folate-dependent formation of 5-methyl-uridine at position 54 (M-5-U54) in all tRNAs. The sequence is that of Methylenetetrahydrofolate--tRNA-(uracil-5-)-methyltransferase TrmFO from Caldicellulosiruptor bescii (strain ATCC BAA-1888 / DSM 6725 / KCTC 15123 / Z-1320) (Anaerocellum thermophilum).